A 422-amino-acid polypeptide reads, in one-letter code: Probable Na(+)/H(+) antiporter 2 (422 aa).

The next 13 membrane-spanning stretches (helical) occupy residues 3 to 23, 28 to 48, 52 to 72, 93 to 113, 119 to 139, 157 to 177, 183 to 203, 216 to 236, 242 to 262, 281 to 301, 307 to 327, 341 to 361, and 384 to 404; these read IVLFLGYLSILFAGGAIIAKI, GIPDIPLLLIFGLILSILNVI, IVESSFDFIGNFGLIILLFIG, ILALLIVWIISGIVFNFVFHL, IGLLFGAIVSATDPATLIPIF, VFNDPLGIVVTLICLSALGLA, ILEFFSLAVGGIILGVIAGKF, YIAPFTLGLAIAFWYFAEGIF, YEISGFMAVAIMGLYIGNVIV, LSIFIRILIFVLLGASISIPL, LPAFLCALGSILLARPVGVLI, IYLALEGPRGVVPATLAAMVY, and LAGTILVATFMTIIVSVVLEA.

The protein belongs to the monovalent cation:proton antiporter 1 (CPA1) transporter (TC 2.A.36) family.

Its subcellular location is the cell membrane. In terms of biological role, this is probably a Na(+)/H(+) antiporter. The polypeptide is Probable Na(+)/H(+) antiporter 2 (Methanocaldococcus jannaschii (strain ATCC 43067 / DSM 2661 / JAL-1 / JCM 10045 / NBRC 100440) (Methanococcus jannaschii)).